The chain runs to 183 residues: Outer membrane protein H.8 (183 aa).

The signal sequence occupies residues 1 to 17 (MKAYLALISAAVIGLAA). Residue Cys18 is the site of N-palmitoyl cysteine attachment. A lipid anchor (S-diacylglycerol cysteine) is attached at Cys18. The interval 27-51 (AEATPAGEAPASEAPAAEAAPADAA) is disordered. In terms of domain architecture, Plastocyanin-like spans 57–183 (GNCAATVESN…LMNGKVTLVD (127 aa)). Residues His102, Cys166, His171, and Met175 each contribute to the Cu cation site.

Requires Cu cation as cofactor.

Its subcellular location is the cell outer membrane. The polypeptide is Outer membrane protein H.8 (Neisseria gonorrhoeae).